We begin with the raw amino-acid sequence, 152 residues long: Transcriptional regulator MraZ (152 aa).

SpoVT-AbrB domains lie at Ala5 to Ala52 and Ala81 to Thr124.

Belongs to the MraZ family. As to quaternary structure, forms oligomers.

It localises to the cytoplasm. The protein localises to the nucleoid. Its function is as follows. Negatively regulates its own expression and that of the subsequent genes in the proximal part of the division and cell wall (dcw) gene cluster. Acts by binding directly to DNA. May also regulate the expression of genes outside the dcw cluster. This chain is Transcriptional regulator MraZ, found in Sodalis glossinidius (strain morsitans).